A 390-amino-acid chain; its full sequence is Cell division protein FtsZ (390 aa).

Residues 21–25 (GGGNN), 108–110 (GTG), E139, R143, and D187 each bind GTP. The segment at 315-390 (FDDKPTSHGR…EERRSRRTRR (76 aa)) is disordered. Residues 326–360 (SGSTGFGTSVNTSSNATSKDESFTSNSSNAQATDS) show a composition bias toward polar residues. Positions 361–384 (VSERTHTTKEDDIPSFIRNREERR) are enriched in basic and acidic residues.

Belongs to the FtsZ family. Homodimer. Polymerizes to form a dynamic ring structure in a strictly GTP-dependent manner. Interacts directly with several other division proteins.

It is found in the cytoplasm. Functionally, essential cell division protein that forms a contractile ring structure (Z ring) at the future cell division site. The regulation of the ring assembly controls the timing and the location of cell division. One of the functions of the FtsZ ring is to recruit other cell division proteins to the septum to produce a new cell wall between the dividing cells. Binds GTP and shows GTPase activity. The polypeptide is Cell division protein FtsZ (Staphylococcus aureus (strain NCTC 8325 / PS 47)).